The primary structure comprises 215 residues: MSKVYDWFEERLEIQSIADDITSKYVPPHVNIFYCLGGITFTCFLVQVATGFAMTFYYRPTVAEAFASVQYIMTEVNFGWLIRSIHRWSASMMVLMMILHVFRVYLTGGFKKPRESTWISGVIMAVCTVSFGVTGYSLPWDQIGYWAVKIVTGVPEAIPVVGGPLVELLRGGVGVGQATLTRFYSLHTFVLPLLTAVFMLAHFLMIRKQGISGPL.

The chain crosses the membrane as a helical span at residues 32–52; the sequence is IFYCLGGITFTCFLVQVATGF. A heme c-binding site is contributed by Cys35. His86 and His100 together coordinate heme b. The next 3 membrane-spanning stretches (helical) occupy residues 90-110, 116-136, and 186-206; these read ASMMVLMMILHVFRVYLTGGF, STWISGVIMAVCTVSFGVTGY, and LHTFVLPLLTAVFMLAHFLMI. Residues His187 and His202 each contribute to the heme b site.

It belongs to the cytochrome b family. PetB subfamily. As to quaternary structure, the 4 large subunits of the cytochrome b6-f complex are cytochrome b6, subunit IV (17 kDa polypeptide, PetD), cytochrome f and the Rieske protein, while the 4 small subunits are PetG, PetL, PetM and PetN. The complex functions as a dimer. Requires heme b as cofactor. The cofactor is heme c.

It localises to the plastid. It is found in the chloroplast thylakoid membrane. Functionally, component of the cytochrome b6-f complex, which mediates electron transfer between photosystem II (PSII) and photosystem I (PSI), cyclic electron flow around PSI, and state transitions. In Tetradesmus obliquus (Green alga), this protein is Cytochrome b6.